Consider the following 322-residue polypeptide: Arginase-1 (322 aa).

Lys-17 carries the N6-succinyllysine modification. Phosphoserine is present on residues Ser-62 and Ser-72. Lys-75 bears the N6-succinyllysine mark. His-101, Asp-124, His-126, and Asp-128 together coordinate Mn(2+). Residues 126–130 (HTDIN) and 137–139 (SGN) each bind substrate. Phosphoserine is present on Ser-163. Asp-183 provides a ligand contact to substrate. Ser-217 is subject to Phosphoserine. Positions 232 and 234 each coordinate Mn(2+). Residues Thr-246 and Glu-277 each coordinate substrate.

It belongs to the arginase family. As to quaternary structure, homotrimer. Interacts with CMTM6. Mn(2+) serves as cofactor. Within the immune system initially reported to be selectively expressed in granulocytes (polymorphonuclear leukocytes [PMNs]). Also detected in macrophages mycobacterial granulomas. Expressed in group2 innate lymphoid cells (ILC2s) during lung disease.

The protein resides in the cytoplasm. It localises to the cytoplasmic granule. It catalyses the reaction L-arginine + H2O = urea + L-ornithine. The protein operates within nitrogen metabolism; urea cycle; L-ornithine and urea from L-arginine: step 1/1. Functionally, key element of the urea cycle converting L-arginine to urea and L-ornithine, which is further metabolized into metabolites proline and polyamides that drive collagen synthesis and bioenergetic pathways critical for cell proliferation, respectively; the urea cycle takes place primarily in the liver and, to a lesser extent, in the kidneys. Its function is as follows. Functions in L-arginine homeostasis in nonhepatic tissues characterized by the competition between nitric oxide synthase (NOS) and arginase for the available intracellular substrate arginine. Arginine metabolism is a critical regulator of innate and adaptive immune responses. Involved in an antimicrobial effector pathway in polymorphonuclear granulocytes (PMN). Upon PMN cell death is liberated from the phagolysosome and depletes arginine in the microenvironment leading to suppressed T cell and natural killer (NK) cell proliferation and cytokine secretion. In group 2 innate lymphoid cells (ILC2s) promotes acute type 2 inflammation in the lung and is involved in optimal ILC2 proliferation but not survival. In humans, the immunological role in the monocytic/macrophage/dendritic cell (DC) lineage is unsure. The chain is Arginase-1 (ARG1) from Homo sapiens (Human).